The primary structure comprises 188 residues: uncharacterized protein (188 aa).

This is an uncharacterized protein from Methanocaldococcus jannaschii (strain ATCC 43067 / DSM 2661 / JAL-1 / JCM 10045 / NBRC 100440) (Methanococcus jannaschii).